The chain runs to 321 residues: Protein ZAR1-like (321 aa).

A disordered region spans residues 110-214; sequence RTLSSCSPWD…GDAASEPLRR (105 aa). The segment covering 145-154 has biased composition (basic and acidic residues); the sequence is LRRDGDEAES. The 3CxxC-type zinc finger occupies 222-307; it reads PKYGYFHCKD…QELCGRCKDK (86 aa).

Belongs to the ZAR1 family. Interacts with YBX2.

The protein localises to the cytoplasm. It localises to the cytoplasmic ribonucleoprotein granule. Functionally, mRNA-binding protein required for maternal mRNA storage, translation and degradation during oocyte maturation. Probably promotes formation of some phase-separated membraneless compartment that stores maternal mRNAs in oocytes: acts by undergoing liquid-liquid phase separation upon binding to maternal mRNAs. Binds to the 3'-UTR of maternal mRNAs, inhibiting their translation. The chain is Protein ZAR1-like from Homo sapiens (Human).